The sequence spans 208 residues: Small ribosomal subunit protein eS1 (208 aa).

It belongs to the eukaryotic ribosomal protein eS1 family.

The chain is Small ribosomal subunit protein eS1 from Saccharolobus solfataricus (strain ATCC 35092 / DSM 1617 / JCM 11322 / P2) (Sulfolobus solfataricus).